The sequence spans 126 residues: Ribosome-binding factor A (126 aa).

It belongs to the RbfA family. As to quaternary structure, monomer. Binds 30S ribosomal subunits, but not 50S ribosomal subunits or 70S ribosomes.

Its subcellular location is the cytoplasm. In terms of biological role, one of several proteins that assist in the late maturation steps of the functional core of the 30S ribosomal subunit. Associates with free 30S ribosomal subunits (but not with 30S subunits that are part of 70S ribosomes or polysomes). Required for efficient processing of 16S rRNA. May interact with the 5'-terminal helix region of 16S rRNA. In Nitrosospira multiformis (strain ATCC 25196 / NCIMB 11849 / C 71), this protein is Ribosome-binding factor A.